We begin with the raw amino-acid sequence, 336 residues long: Transmembrane protein 19 (336 aa).

The next 6 helical transmembrane spans lie at 15-35, 49-69, 84-104, 218-238, 257-277, and 313-333; these read MITN…FWII, ISPW…SNGL, VVGF…LMFF, VTVV…IAYF, IIAF…YLGA, and VNLF…WGFW.

It belongs to the TMEM19 family.

It localises to the membrane. In Homo sapiens (Human), this protein is Transmembrane protein 19 (TMEM19).